The primary structure comprises 440 residues: Methylenetetrahydrofolate--tRNA-(uracil-5-)-methyltransferase TrmFO (440 aa).

14–19 contributes to the FAD binding site; sequence GAGLAG.

It belongs to the MnmG family. TrmFO subfamily. Requires FAD as cofactor.

It localises to the cytoplasm. It carries out the reaction uridine(54) in tRNA + (6R)-5,10-methylene-5,6,7,8-tetrahydrofolate + NADH + H(+) = 5-methyluridine(54) in tRNA + (6S)-5,6,7,8-tetrahydrofolate + NAD(+). The enzyme catalyses uridine(54) in tRNA + (6R)-5,10-methylene-5,6,7,8-tetrahydrofolate + NADPH + H(+) = 5-methyluridine(54) in tRNA + (6S)-5,6,7,8-tetrahydrofolate + NADP(+). Its function is as follows. Catalyzes the folate-dependent formation of 5-methyl-uridine at position 54 (M-5-U54) in all tRNAs. This chain is Methylenetetrahydrofolate--tRNA-(uracil-5-)-methyltransferase TrmFO, found in Bdellovibrio bacteriovorus (strain ATCC 15356 / DSM 50701 / NCIMB 9529 / HD100).